The primary structure comprises 330 residues: Stomatin-1 (330 aa).

The segment covering 1-19 (MQPSETVEMQEMAQPSGQQ) has biased composition (polar residues). A disordered region spans residues 1–27 (MQPSETVEMQEMAQPSGQQRDVEARVQ). Residues 42–62 (MFCIAMSYVLIFLTFPVSVFM) traverse the membrane as a helical segment.

This sequence belongs to the band 7/mec-2 family.

It localises to the membrane. The sequence is that of Stomatin-1 (sto-1) from Caenorhabditis elegans.